A 122-amino-acid polypeptide reads, in one-letter code: Large ribosomal subunit protein uL14c (122 aa).

The protein belongs to the universal ribosomal protein uL14 family. As to quaternary structure, part of the 50S ribosomal subunit.

The protein localises to the plastid. It is found in the chloroplast. Binds to 23S rRNA. The chain is Large ribosomal subunit protein uL14c from Cryptomeria japonica (Japanese cedar).